The primary structure comprises 397 residues: Phosphoglycerate kinase (397 aa).

Substrate contacts are provided by residues 23–25 (DLN), R38, 61–64 (HLGR), R119, and R152. Residues K202, E324, and 354–357 (GGDT) contribute to the ATP site.

Belongs to the phosphoglycerate kinase family. As to quaternary structure, monomer.

Its subcellular location is the cytoplasm. It catalyses the reaction (2R)-3-phosphoglycerate + ATP = (2R)-3-phospho-glyceroyl phosphate + ADP. It functions in the pathway carbohydrate degradation; glycolysis; pyruvate from D-glyceraldehyde 3-phosphate: step 2/5. The polypeptide is Phosphoglycerate kinase (pgk) (Xanthobacter flavus).